A 263-amino-acid polypeptide reads, in one-letter code: Small ribosomal subunit protein eS1 (263 aa).

Over residues 236–254 the composition is skewed to basic and acidic residues; that stretch reads GDGKGGSDEPGARVDRPEG. Residues 236–263 form a disordered region; it reads GDGKGGSDEPGARVDRPEGYEPPVQETV.

The protein belongs to the eukaryotic ribosomal protein eS1 family. In terms of assembly, component of the small ribosomal subunit. Mature ribosomes consist of a small (40S) and a large (60S) subunit. The 40S subunit contains about 33 different proteins and 1 molecule of RNA (18S). The 60S subunit contains about 49 different proteins and 3 molecules of RNA (28S, 5.8S and 5S).

Its subcellular location is the cytoplasm. The sequence is that of Small ribosomal subunit protein eS1 from Periplaneta americana (American cockroach).